The following is a 1872-amino-acid chain: MPTVCLLPLLFFTIGGCLGSSRPFRTFVVTDTTLTHLAVHRVTGEVFVGAVNRVFKLAPNLTELRAHVTGPIEDNARCYPPPSMRVCSHRLVPVDNVNKLLLIDYAARRLVACGSIWQGICQFLRLDDLFKLGEPHHRKEHYLSGAQEPDSMAGVIVEQVQGPSKLFVGTAVDGKSEYFPTLSSRKLIDDEDSGDMFSLVYQDEFVSSQIKIPSDTLSLYPAFDIYYIYGFVSASFVYFLTLQLDTQQTLLDTAGEKFFTSKIVRMCAGDSEFYSYVEFPIGCSWRGVEYRLVQSAHLAKPGLLLAQALGVPADEDVLFTIFSQGQKNRANPPRQTILCLFTLSSINAHIRRRIQSCYRGEGTLALPWLLNKELPCINTPLQINGNFCGLVLNQPLGGLHVIEGLPLLADSTDGMASVAAYTYHQHSVVFIGTRSGNLKKVRVDGSQDAQLYETVSVVQGSPILRDLLFSPDHRHIYLLSEKQVSQLPVETCEQYLSCAACLGSGDPHCGWCVLQHRCCREGACPGASAPHGFAEELSKCIQVRVRPNNVSVTSSGVQLTVAMRNVPDLSVGVSCSFEEVTESEAILLPSGELRCPSPSLQELQTLTRGHGATHTVRLQLLSMETGVRFAGVDFVFYNCSALQSCMSCVGSPYPCHWCKYRHVCTSHPHECSFQEGRVHSPEGCPEILPQGDLLIPVGVMQPLTLRAKNLPQPQSGQKNYECVVRVQGRQHRVPAVRFNSSSVQCQNASYFYEGDEFGDTELDFSVVWDGDFPIDKPPSFRALLYKCWAQRPSCGLCLKADPRFNCGWCISEHRCQLRAHCPAPKSNWMHPSQKGARCSHPRITQIHPLTGPKEGGTRVTIVGENLGLTSREVGLRVAGVRCNSIPTEYVSAERIVCEMEESLVPSPPPGPAELCVGDCSADFRTQSQQLYSFVTPTFDRVSPSRGPASGGTRLTISGISLDAGSRVTVIIRDGECQFVRRDAEAIVCISPVSTLGPSQSPITLAIDHANISNTGVIYTYTQDPTVTHLEPTWSIINGSTSITVSGTHLLTVQEPRVRAKYRGIETTNTCQVINDTAMLCKAPGIFLGHPQPRAQGEHPDEFGFLLDHVQAARSLNRSSFTYYPDPSFEPLGPSGVLDVKPGSHVVLKGKNLIPAAAGSSRLNYTVLIGGQPCALTVSDTQLLCDSPSQTGRQPVMVLVGGLEFWLGTLHITADRALTLPAMVGLAAGGGLLLLAITVVLVAYKRKTQDADRTLKRLQLQMDNLESRVALECKEAFAELQTDINELTNHMDGVQIPFLDYRTYAVRVLFPGIEAHPVLKELDTPPNVEKALRLFGQLLHSRAFLLTFIHTLEAQSSFSMRDRGTVASLTMVALQSRLDYATGLLKQLLADLIEKNLESKNHPKLLLRRTESVAEKMLTNWFTFLLHKFLKECAGEPLFLLYCAIKQQMEKGPIDAITGEARYSLSEDKLIRQQIDYKTLTLHCVCPESEGSAQVPVKVLNCDSITQAKDKLLDTVYKGIPYSQRPKAEDMDLEWRQGRMARIILQDEDITTKIECDWKRVNSLAHYQVTDGSLVALVPKQVSAYNMANSFTFTRSLSRYESLLRAASSPDSLRSRAPMLTPDQEAGTKLWHLVRNHDHTDHREGDRGSKMVSEIYLTRLLATKGTLQKFVDDLFETVFSTAHRGSALPLAIKYMFDFLDEQADQRQISDPDVRHTWKSNCLPLRFWVNVIKNPQFVFDIHKNSITDACLSVVAQTFMDSCSTSEHRLGKDSPSNKLLYAKDIPNYKSWVERYYRDIAKMASISDQDMDAYLVEQSRLHANDFNVLSALSELYFYVTKYRQEILTSLDRDASCRKHKLRQKLEQIITLVSSSS.

An N-terminal signal peptide occupies residues 1 to 19 (MPTVCLLPLLFFTIGGCLG). The Sema domain maps to 20-489 (SSRPFRTFVV…SEKQVSQLPV (470 aa)). Residues 20–1220 (SSRPFRTFVV…ITADRALTLP (1201 aa)) are Extracellular-facing. N60 is a glycosylation site (N-linked (GlcNAc...) asparagine). 9 disulfide bridges follow: C78–C87, C113–C121, C267–C388, C283–C339, C357–C376, C492–C509, C498–C540, C501–C518, and C512–C524. Residue N549 is glycosylated (N-linked (GlcNAc...) asparagine). C575 and C595 form a disulfide bridge. 4 consecutive IPT/TIG domains span residues 841–934 (PRIT…YSFV), 936–1021 (PTFD…YTYT), 1024–1123 (PTVT…FTYY), and 1126–1212 (PSFE…LHIT). N-linked (GlcNAc...) asparagine glycosylation is present at N1163. Residues 1221-1241 (AMVGLAAGGGLLLLAITVVLV) form a helical membrane-spanning segment. Residues 1240–1294 (LVAYKRKTQDADRTLKRLQLQMDNLESRVALECKEAFAELQTDINELTNHMDGVQ) adopt a coiled-coil conformation. The Cytoplasmic segment spans residues 1242-1872 (AYKRKTQDAD…QIITLVSSSS (631 aa)). S1597 carries the phosphoserine modification.

This sequence belongs to the plexin family. As to expression, detected in embryonic hindbrain, spinal cord, dorsal root ganglion, trigeminal ganglion and superior cervical ganglion. In newborns, detected throughout all layers of the hippocampus.

The protein localises to the cell membrane. In terms of biological role, coreceptor for SEMA3A and SEMA3F. Necessary for signaling by class 3 semaphorins and subsequent remodeling of the cytoskeleton. Plays a role in axon guidance in the developing nervous system. Regulates the migration of sympathetic neurons, but not of neural crest precursors. Required for normal dendrite spine morphology in pyramidal neurons. May play a role in regulating semaphorin-mediated programmed cell death in the developing nervous system. Class 3 semaphorins bind to a complex composed of a neuropilin and a plexin. The plexin modulates the affinity of the complex for specific semaphorins, and its cytoplasmic domain is required for the activation of down-stream signaling events in the cytoplasm. In Mus musculus (Mouse), this protein is Plexin-A3 (Plxna3).